A 305-amino-acid chain; its full sequence is Phosphoribosylaminoimidazole-succinocarboxamide synthase (305 aa).

Belongs to the SAICAR synthetase family.

It catalyses the reaction 5-amino-1-(5-phospho-D-ribosyl)imidazole-4-carboxylate + L-aspartate + ATP = (2S)-2-[5-amino-1-(5-phospho-beta-D-ribosyl)imidazole-4-carboxamido]succinate + ADP + phosphate + 2 H(+). Its pathway is purine metabolism; IMP biosynthesis via de novo pathway; 5-amino-1-(5-phospho-D-ribosyl)imidazole-4-carboxamide from 5-amino-1-(5-phospho-D-ribosyl)imidazole-4-carboxylate: step 1/2. This Tropheryma whipplei (strain Twist) (Whipple's bacillus) protein is Phosphoribosylaminoimidazole-succinocarboxamide synthase.